We begin with the raw amino-acid sequence, 880 residues long: DNA-directed RNA polymerase subunit Rpo1N (880 aa).

4 residues coordinate Zn(2+): Cys58, Cys61, Cys68, and His71. DsDNA is bound by residues Lys88 and 92-95 (EFLK). 2 residues coordinate Zn(2+): Cys98 and Cys101. Lys138 contributes to the dsDNA binding site. Cys146 and Cys149 together coordinate Zn(2+). DsDNA contacts are provided by residues Lys303, 305-310 (KEGRFR), Arg323, and Gln422. Mg(2+)-binding residues include Asp456, Asp458, and Asp460. Residues Arg573, Cys575, Cys580, and His582 each contribute to the Zn(2+) site. Residues 812 to 822 (RTSQSGYMQRR) and Gln815 contribute to the dsDNA site.

The protein belongs to the RNA polymerase beta' chain family. As to quaternary structure, part of the 13-subunit RNA polymerase complex. Rpo1N and Rpo5 form a cleft which docks Rpo13. Interacts with Rpo8 on the periphery of the clamp head. Requires Mg(2+) as cofactor. Zn(2+) serves as cofactor.

It is found in the cytoplasm. The enzyme catalyses RNA(n) + a ribonucleoside 5'-triphosphate = RNA(n+1) + diphosphate. Its function is as follows. DNA-dependent RNA polymerase (RNAP) catalyzes the transcription of DNA into RNA using the four ribonucleoside triphosphates as substrates. Forms the clamp head domain. In Saccharolobus shibatae (strain ATCC 51178 / DSM 5389 / JCM 8931 / NBRC 15437 / B12) (Sulfolobus shibatae), this protein is DNA-directed RNA polymerase subunit Rpo1N.